The following is a 418-amino-acid chain: Light-independent protochlorophyllide reductase subunit N (418 aa).

[4Fe-4S] cluster contacts are provided by cysteine 17, cysteine 42, and cysteine 103.

This sequence belongs to the BchN/ChlN family. In terms of assembly, protochlorophyllide reductase is composed of three subunits; ChlL, ChlN and ChlB. Forms a heterotetramer of two ChlB and two ChlN subunits. [4Fe-4S] cluster serves as cofactor.

The enzyme catalyses chlorophyllide a + oxidized 2[4Fe-4S]-[ferredoxin] + 2 ADP + 2 phosphate = protochlorophyllide a + reduced 2[4Fe-4S]-[ferredoxin] + 2 ATP + 2 H2O. It functions in the pathway porphyrin-containing compound metabolism; chlorophyll biosynthesis (light-independent). In terms of biological role, component of the dark-operative protochlorophyllide reductase (DPOR) that uses Mg-ATP and reduced ferredoxin to reduce ring D of protochlorophyllide (Pchlide) to form chlorophyllide a (Chlide). This reaction is light-independent. The NB-protein (ChlN-ChlB) is the catalytic component of the complex. This Prochlorococcus marinus (strain AS9601) protein is Light-independent protochlorophyllide reductase subunit N.